The sequence spans 142 residues: Holo-[acyl-carrier-protein] synthase (142 aa).

Mg(2+) contacts are provided by Asp8 and Glu57.

Belongs to the P-Pant transferase superfamily. AcpS family. Requires Mg(2+) as cofactor.

The protein localises to the cytoplasm. The catalysed reaction is apo-[ACP] + CoA = holo-[ACP] + adenosine 3',5'-bisphosphate + H(+). Its function is as follows. Transfers the 4'-phosphopantetheine moiety from coenzyme A to a Ser of acyl-carrier-protein. This is Holo-[acyl-carrier-protein] synthase from Maricaulis maris (strain MCS10) (Caulobacter maris).